Here is a 692-residue protein sequence, read N- to C-terminus: Elongation factor G (692 aa).

The 275-residue stretch at 8–282 (ENTRNIGIMA…AVIDYLPSPL (275 aa)) folds into the tr-type G domain. Residues 17 to 24 (AHIDAGKT), 81 to 85 (DTPGH), and 135 to 138 (NKMD) each bind GTP.

Belongs to the TRAFAC class translation factor GTPase superfamily. Classic translation factor GTPase family. EF-G/EF-2 subfamily.

The protein resides in the cytoplasm. In terms of biological role, catalyzes the GTP-dependent ribosomal translocation step during translation elongation. During this step, the ribosome changes from the pre-translocational (PRE) to the post-translocational (POST) state as the newly formed A-site-bound peptidyl-tRNA and P-site-bound deacylated tRNA move to the P and E sites, respectively. Catalyzes the coordinated movement of the two tRNA molecules, the mRNA and conformational changes in the ribosome. In Bacillus cereus (strain Q1), this protein is Elongation factor G.